The sequence spans 211 residues: ATP-dependent Clp protease proteolytic subunit (211 aa).

The active-site Nucleophile is Ser114. Residue His139 is part of the active site.

It belongs to the peptidase S14 family. As to quaternary structure, fourteen ClpP subunits assemble into 2 heptameric rings which stack back to back to give a disk-like structure with a central cavity, resembling the structure of eukaryotic proteasomes.

Its subcellular location is the cytoplasm. It catalyses the reaction Hydrolysis of proteins to small peptides in the presence of ATP and magnesium. alpha-casein is the usual test substrate. In the absence of ATP, only oligopeptides shorter than five residues are hydrolyzed (such as succinyl-Leu-Tyr-|-NHMec, and Leu-Tyr-Leu-|-Tyr-Trp, in which cleavage of the -Tyr-|-Leu- and -Tyr-|-Trp bonds also occurs).. Functionally, cleaves peptides in various proteins in a process that requires ATP hydrolysis. Has a chymotrypsin-like activity. Plays a major role in the degradation of misfolded proteins. The chain is ATP-dependent Clp protease proteolytic subunit from Pseudomonas fluorescens (strain Pf0-1).